Reading from the N-terminus, the 280-residue chain is Glycoprotein G (280 aa).

Residues 1–24 form the signal peptide; that stretch reads MGHSGENVLCVALLAIYLAAGGAA. 2 N-linked (GlcNAc...) asparagine; by host glycosylation sites follow: Asn85 and Asn111. A disordered region spans residues 191–218; that stretch reads ESSEERVVATDSDSGSCEDDEKEEKSDC.

It belongs to the alphaherpesvirinae glycoprotein G family.

The sequence is that of Glycoprotein G (gG) from Psittacid herpesvirus 1 (isolate Amazon parrot/-/97-0001/1997) (PsHV-1).